A 383-amino-acid chain; its full sequence is Inactive serine protease 54 (383 aa).

Residues 1–20 form the signal peptide; that stretch reads MAEMRGMLLMLLYISHSSSA. Positions 21-258 constitute a Peptidase S1 domain; that stretch reads ICGIQKATIA…YSDWITAKTR (238 aa). Asn-113 is a glycosylation site (N-linked (GlcNAc...) asparagine). Intrachain disulfides connect Cys-154-Cys-216, Cys-185-Cys-195, and Cys-206-Cys-237. The interval 305-334 is disordered; it reads QGQRMSTKSNKQKDAGQNFRVNRQPETSGP. The segment covering 323–334 has biased composition (polar residues); the sequence is FRVNRQPETSGP.

The protein belongs to the peptidase S1 family. Plasma kallikrein subfamily.

The protein localises to the secreted. The sequence is that of Inactive serine protease 54 (Prss54) from Mus musculus (Mouse).